Here is a 264-residue protein sequence, read N- to C-terminus: Phosphatidylglycerol--prolipoprotein diacylglyceryl transferase (264 aa).

The next 3 helical transmembrane spans lie at L17 to A37, L59 to Y79, and W95 to F115. R142 contributes to the a 1,2-diacyl-sn-glycero-3-phospho-(1'-sn-glycerol) binding site. 2 helical membrane passes run G205–F225 and M241–G261.

Belongs to the Lgt family.

The protein localises to the cell inner membrane. The enzyme catalyses L-cysteinyl-[prolipoprotein] + a 1,2-diacyl-sn-glycero-3-phospho-(1'-sn-glycerol) = an S-1,2-diacyl-sn-glyceryl-L-cysteinyl-[prolipoprotein] + sn-glycerol 1-phosphate + H(+). Its pathway is protein modification; lipoprotein biosynthesis (diacylglyceryl transfer). In terms of biological role, catalyzes the transfer of the diacylglyceryl group from phosphatidylglycerol to the sulfhydryl group of the N-terminal cysteine of a prolipoprotein, the first step in the formation of mature lipoproteins. This Methylibium petroleiphilum (strain ATCC BAA-1232 / LMG 22953 / PM1) protein is Phosphatidylglycerol--prolipoprotein diacylglyceryl transferase.